We begin with the raw amino-acid sequence, 415 residues long: Serine--tRNA ligase (415 aa).

231–233 (TAE) is a binding site for L-serine. 262–264 (RSE) contributes to the ATP binding site. Residue E285 coordinates L-serine. 349–352 (EISS) contacts ATP. An L-serine-binding site is contributed by S383.

The protein belongs to the class-II aminoacyl-tRNA synthetase family. Type-1 seryl-tRNA synthetase subfamily. Homodimer. The tRNA molecule binds across the dimer.

Its subcellular location is the cytoplasm. The enzyme catalyses tRNA(Ser) + L-serine + ATP = L-seryl-tRNA(Ser) + AMP + diphosphate + H(+). It carries out the reaction tRNA(Sec) + L-serine + ATP = L-seryl-tRNA(Sec) + AMP + diphosphate + H(+). It functions in the pathway aminoacyl-tRNA biosynthesis; selenocysteinyl-tRNA(Sec) biosynthesis; L-seryl-tRNA(Sec) from L-serine and tRNA(Sec): step 1/1. In terms of biological role, catalyzes the attachment of serine to tRNA(Ser). Is also able to aminoacylate tRNA(Sec) with serine, to form the misacylated tRNA L-seryl-tRNA(Sec), which will be further converted into selenocysteinyl-tRNA(Sec). The chain is Serine--tRNA ligase from Helicobacter acinonychis (strain Sheeba).